A 415-amino-acid chain; its full sequence is Serine hydroxymethyltransferase (415 aa).

(6S)-5,6,7,8-tetrahydrofolate-binding positions include L119 and 123–125; that span reads GHL. K228 is modified (N6-(pyridoxal phosphate)lysine). Residue 353-355 coordinates (6S)-5,6,7,8-tetrahydrofolate; sequence SPF.

The protein belongs to the SHMT family. In terms of assembly, homodimer. It depends on pyridoxal 5'-phosphate as a cofactor.

It is found in the cytoplasm. The catalysed reaction is (6R)-5,10-methylene-5,6,7,8-tetrahydrofolate + glycine + H2O = (6S)-5,6,7,8-tetrahydrofolate + L-serine. It functions in the pathway one-carbon metabolism; tetrahydrofolate interconversion. Its pathway is amino-acid biosynthesis; glycine biosynthesis; glycine from L-serine: step 1/1. Catalyzes the reversible interconversion of serine and glycine with tetrahydrofolate (THF) serving as the one-carbon carrier. Also exhibits THF-independent aldolase activity toward beta-hydroxyamino acids, producing glycine and aldehydes, via a retro-aldol mechanism. This is Serine hydroxymethyltransferase from Halorubrum lacusprofundi (strain ATCC 49239 / DSM 5036 / JCM 8891 / ACAM 34).